Consider the following 124-residue polypeptide: Phosphoribosyl-ATP pyrophosphatase (124 aa).

Belongs to the PRA-PH family.

The protein localises to the cytoplasm. It carries out the reaction 1-(5-phospho-beta-D-ribosyl)-ATP + H2O = 1-(5-phospho-beta-D-ribosyl)-5'-AMP + diphosphate + H(+). It participates in amino-acid biosynthesis; L-histidine biosynthesis; L-histidine from 5-phospho-alpha-D-ribose 1-diphosphate: step 2/9. The chain is Phosphoribosyl-ATP pyrophosphatase (hisE) from Ralstonia nicotianae (strain ATCC BAA-1114 / GMI1000) (Ralstonia solanacearum).